A 152-amino-acid chain; its full sequence is Large ribosomal subunit protein uL15 (152 aa).

Belongs to the universal ribosomal protein uL15 family. In terms of assembly, part of the 50S ribosomal subunit.

Functionally, binds to the 23S rRNA. The chain is Large ribosomal subunit protein uL15 from Staphylothermus marinus (strain ATCC 43588 / DSM 3639 / JCM 9404 / F1).